The following is a 465-amino-acid chain: UDP-N-acetylmuramate--L-alanine ligase (465 aa).

112 to 118 is an ATP binding site; that stretch reads GTHGKTT.

The protein belongs to the MurCDEF family.

It is found in the cytoplasm. It carries out the reaction UDP-N-acetyl-alpha-D-muramate + L-alanine + ATP = UDP-N-acetyl-alpha-D-muramoyl-L-alanine + ADP + phosphate + H(+). The protein operates within cell wall biogenesis; peptidoglycan biosynthesis. In terms of biological role, cell wall formation. The chain is UDP-N-acetylmuramate--L-alanine ligase from Burkholderia ambifaria (strain ATCC BAA-244 / DSM 16087 / CCUG 44356 / LMG 19182 / AMMD) (Burkholderia cepacia (strain AMMD)).